The following is a 477-amino-acid chain: UDP-N-acetylmuramate--L-alanine ligase (477 aa).

122–128 (GTHGKTT) contributes to the ATP binding site.

The protein belongs to the MurCDEF family.

It is found in the cytoplasm. The enzyme catalyses UDP-N-acetyl-alpha-D-muramate + L-alanine + ATP = UDP-N-acetyl-alpha-D-muramoyl-L-alanine + ADP + phosphate + H(+). The protein operates within cell wall biogenesis; peptidoglycan biosynthesis. In terms of biological role, cell wall formation. This chain is UDP-N-acetylmuramate--L-alanine ligase, found in Xanthomonas euvesicatoria pv. vesicatoria (strain 85-10) (Xanthomonas campestris pv. vesicatoria).